The sequence spans 148 residues: Transcriptional regulator MraZ (148 aa).

SpoVT-AbrB domains lie at 5–53 (ETAI…AEKE) and 82–125 (SAVL…SEQA).

The protein belongs to the MraZ family. In terms of assembly, forms oligomers.

It localises to the cytoplasm. The protein resides in the nucleoid. This is Transcriptional regulator MraZ from Xanthomonas axonopodis pv. citri (strain 306).